The sequence spans 75 residues: Defensin J1-1 (75 aa).

The signal sequence occupies residues 1–27 (MAGFSKVVATIFLMMLLVFATDMMAEA). Intrachain disulfides connect cysteine 30–cysteine 74, cysteine 41–cysteine 61, cysteine 47–cysteine 68, and cysteine 51–cysteine 70.

This sequence belongs to the DEFL family. Monomer. In terms of tissue distribution, expressed in orange and red ripe fruit and to a lesser extent in mature, green fruit. Present in trace in young, green fruit.

Its subcellular location is the secreted. In terms of biological role, plant defense peptide with antifungal activity against F.oxysporum and B.cinerea. The chain is Defensin J1-1 from Capsicum annuum (Capsicum pepper).